Reading from the N-terminus, the 745-residue chain is Probable GMP synthase [glutamine-hydrolyzing] (745 aa).

Residues 1 to 37 form a disordered region; that stretch reads MKRSSSMLDINEDSQHSTNKAPPPKKAPEDRFDSANM. One can recognise a Glutamine amidotransferase type-1 domain in the interval 60 to 252; that stretch reads RIAILDFGAQ…LFKVVGCCGN (193 aa). The active-site For GATase activity is the cysteine 138. Catalysis depends on residues histidine 226 and glutamate 228. Residues 253-461 enclose the GMPS ATP-PPase domain; the sequence is FTIQNREQSC…LGLPESIVQR (209 aa). 280–286 is a binding site for ATP; it reads SGGVDSA. 5 residues coordinate substrate: arginine 363, aspartate 563, glutamine 662, lysine 737, and glutamate 743.

In terms of assembly, homodimer.

The enzyme catalyses XMP + L-glutamine + ATP + H2O = GMP + L-glutamate + AMP + diphosphate + 2 H(+). It functions in the pathway purine metabolism; GMP biosynthesis; GMP from XMP (L-Gln route): step 1/1. The polypeptide is Probable GMP synthase [glutamine-hydrolyzing] (gmps-1) (Caenorhabditis elegans).